The chain runs to 466 residues: ATP synthase subunit beta (466 aa).

Residue 148–155 (GGAGVGKT) participates in ATP binding.

It belongs to the ATPase alpha/beta chains family. As to quaternary structure, F-type ATPases have 2 components, CF(1) - the catalytic core - and CF(0) - the membrane proton channel. CF(1) has five subunits: alpha(3), beta(3), gamma(1), delta(1), epsilon(1). CF(0) has three main subunits: a(1), b(2) and c(9-12). The alpha and beta chains form an alternating ring which encloses part of the gamma chain. CF(1) is attached to CF(0) by a central stalk formed by the gamma and epsilon chains, while a peripheral stalk is formed by the delta and b chains.

The protein resides in the cell inner membrane. It carries out the reaction ATP + H2O + 4 H(+)(in) = ADP + phosphate + 5 H(+)(out). Produces ATP from ADP in the presence of a proton gradient across the membrane. The catalytic sites are hosted primarily by the beta subunits. This is ATP synthase subunit beta from Xylella fastidiosa (strain M12).